Here is a 179-residue protein sequence, read N- to C-terminus: Large ribosomal subunit protein uL5 (179 aa).

This sequence belongs to the universal ribosomal protein uL5 family. In terms of assembly, part of the 50S ribosomal subunit; part of the 5S rRNA/L5/L18/L25 subcomplex. Contacts the 5S rRNA and the P site tRNA. Forms a bridge to the 30S subunit in the 70S ribosome.

In terms of biological role, this is one of the proteins that bind and probably mediate the attachment of the 5S RNA into the large ribosomal subunit, where it forms part of the central protuberance. In the 70S ribosome it contacts protein S13 of the 30S subunit (bridge B1b), connecting the 2 subunits; this bridge is implicated in subunit movement. Contacts the P site tRNA; the 5S rRNA and some of its associated proteins might help stabilize positioning of ribosome-bound tRNAs. This is Large ribosomal subunit protein uL5 from Klebsiella pneumoniae (strain 342).